We begin with the raw amino-acid sequence, 238 residues long: tRNA (guanine-N(1)-)-methyltransferase (238 aa).

S-adenosyl-L-methionine is bound by residues Gly108 and 127–132 (LGDFVL).

It belongs to the RNA methyltransferase TrmD family. In terms of assembly, homodimer.

The protein localises to the cytoplasm. The enzyme catalyses guanosine(37) in tRNA + S-adenosyl-L-methionine = N(1)-methylguanosine(37) in tRNA + S-adenosyl-L-homocysteine + H(+). Its function is as follows. Specifically methylates guanosine-37 in various tRNAs. This is tRNA (guanine-N(1)-)-methyltransferase from Streptococcus uberis (strain ATCC BAA-854 / 0140J).